The following is a 143-amino-acid chain: Beta/delta-urticatoxin-Uf2a (143 aa).

The first 18 residues, 1–18 (MGAIVLVALMALVASSSA), serve as a signal peptide directing secretion. Residues 19–80 (FSDIEHNIMK…MMLSGRPQPN (62 aa)) constitute a propeptide that is removed on maturation. 6 cysteine pairs are disulfide-bonded: Cys83/Cys100, Cys90/Cys105, Cys99/Cys113, Cys115/Cys129, Cys122/Cys134, and Cys128/Cys142.

Belongs to the urticatoxin-2 family. Expressed in trichomes, that are stiff epidermal hairs located on the surface of petioles and leaves.

Its subcellular location is the secreted. Functionally, plant defense neurotoxin that causes pain and systemic symptoms in mammals via modulation of voltage-gated sodium channels (Nav). Potent modulator of human Nav1.5/SCN5A (EC(50)=55 nM), Nav1.6/SCN8A (EC(50)=0.86 nM), and Nav1.7/SCN9A (EC(50)=208 nM), where it shifts the activation threshold to more negative potentials and delays fast inactivation. Also shifts the voltage-dependence of steady-state fast inactivation of Nav1.6/SCN8A, but not that of Nav1.5/SCN5A or Nav1.7/SCN9A. On Nav1.7/SCN9A, principally acts by binding to extracellular loops of domain IV (Nav site 3). Does not affect current response of the tetrodotoxin (TTX)-resistant Nav1.8/SCN10A sodium channel. In vivo, intraplantar injection into mice causes numerous dose-dependent, immediate, and long-lasting spontaneous pain behaviors, while no swelling is observed in the injected paw. At the highest doses tested, systemic symptoms including hypokinesia and hypersalivation are observed. This Urtica ferox (Tree nettle) protein is Beta/delta-urticatoxin-Uf2a.